Consider the following 259-residue polypeptide: Thiazole synthase (259 aa).

Catalysis depends on Lys95, which acts as the Schiff-base intermediate with DXP. 1-deoxy-D-xylulose 5-phosphate-binding positions include Gly156, 183–184 (AG), and 205–206 (NS).

This sequence belongs to the ThiG family. As to quaternary structure, homotetramer. Forms heterodimers with either ThiH or ThiS.

The protein localises to the cytoplasm. It carries out the reaction [ThiS sulfur-carrier protein]-C-terminal-Gly-aminoethanethioate + 2-iminoacetate + 1-deoxy-D-xylulose 5-phosphate = [ThiS sulfur-carrier protein]-C-terminal Gly-Gly + 2-[(2R,5Z)-2-carboxy-4-methylthiazol-5(2H)-ylidene]ethyl phosphate + 2 H2O + H(+). Its pathway is cofactor biosynthesis; thiamine diphosphate biosynthesis. Catalyzes the rearrangement of 1-deoxy-D-xylulose 5-phosphate (DXP) to produce the thiazole phosphate moiety of thiamine. Sulfur is provided by the thiocarboxylate moiety of the carrier protein ThiS. In vitro, sulfur can be provided by H(2)S. The protein is Thiazole synthase of Coxiella burnetii (strain RSA 331 / Henzerling II).